Consider the following 364-residue polypeptide: MLWPALRSVLFQLDPERVHHLAHWALHRVPPALARARRPAPVPALAVRCMGLDFDGPMGLAAGFDKGDVALPGLFGLGFSHVEIGTITPRPQPGNDRPRLFRLPEHRALLNRMGFNNEGMEACARRLAALPAAARLGPVGINVGKNKATPNEDAASDYLACIERLHPYADYLVVNISSPNTPGLRQLQEREALDRLLRACVRHLAERAPGKPLLVKLAPDLSPEALDEAVDVAIAAGAAGIVATNTTLSRAGVERHPRAAEAGGLSGAPLERLATEVVRRCYARAAGRVPIVGVGGVMDAEGAYAKIRAGATLVQAYTGLIYGGPGFVGRVNAGLARLLERDGFSTLSDAVGADHRQGGGKAAG.

FMN contacts are provided by residues 62-66 and Thr-86; that span reads AGFDK. Lys-66 is a substrate binding site. Substrate is bound at residue 111-115; sequence NRMGF. FMN-binding residues include Asn-142 and Asn-175. Asn-175 is a substrate binding site. Catalysis depends on Ser-178, which acts as the Nucleophile. Asn-180 contributes to the substrate binding site. FMN-binding residues include Lys-216 and Thr-244. 245 to 246 provides a ligand contact to substrate; the sequence is NT. FMN contacts are provided by residues Gly-267, Gly-296, and 317-318; that span reads YT.

The protein belongs to the dihydroorotate dehydrogenase family. Type 2 subfamily. As to quaternary structure, monomer. It depends on FMN as a cofactor.

The protein resides in the cell membrane. It carries out the reaction (S)-dihydroorotate + a quinone = orotate + a quinol. Its pathway is pyrimidine metabolism; UMP biosynthesis via de novo pathway; orotate from (S)-dihydroorotate (quinone route): step 1/1. Functionally, catalyzes the conversion of dihydroorotate to orotate with quinone as electron acceptor. This is Dihydroorotate dehydrogenase (quinone) from Anaeromyxobacter dehalogenans (strain 2CP-C).